Here is an 83-residue protein sequence, read N- to C-terminus: Cytochrome c oxidase subunit 12, mitochondrial (83 aa).

The 44-residue stretch at 24–67 (TKHCWQSYVDYHKCVNMKGEDFAPCKVFWKTYNALCPLDWIEKW) folds into the CHCH domain. Residues 27 to 37 (CWQSYVDYHKC) carry the Cx9C motif motif. 2 disulfides stabilise this stretch: C27-C59 and C37-C48. The Cx10C motif signature appears at 48–59 (CKVFWKTYNALC). Phosphoserine is present on S82.

This sequence belongs to the cytochrome c oxidase subunit 6B family. In terms of assembly, component of the cytochrome c oxidase (complex IV, CIV), a multisubunit enzyme composed of 12 subunits. The complex is composed of a catalytic core of 3 subunits COX1, COX2 and COX3, encoded in the mitochondrial DNA, and 9 supernumerary subunits COX4, COX5A (or COX5B), COX6, COX7, COX8, COX9, COX12, COX13 and COX26, which are encoded in the nuclear genome. The complex exists as a monomer or a dimer and forms supercomplexes (SCs) in the inner mitochondrial membrane with a dimer of ubiquinol-cytochrome c oxidoreductase (cytochrome b-c1 complex, complex III, CIII), resulting in 2 different assemblies (supercomplexes III(2)IV and III(2)IV(2)).

It localises to the mitochondrion inner membrane. Its pathway is energy metabolism; oxidative phosphorylation. Component of the cytochrome c oxidase, the last enzyme in the mitochondrial electron transport chain which drives oxidative phosphorylation. The respiratory chain contains 3 multisubunit complexes succinate dehydrogenase (complex II, CII), ubiquinol-cytochrome c oxidoreductase (cytochrome b-c1 complex, complex III, CIII) and cytochrome c oxidase (complex IV, CIV), that cooperate to transfer electrons derived from NADH and succinate to molecular oxygen, creating an electrochemical gradient over the inner membrane that drives transmembrane transport and the ATP synthase. Cytochrome c oxidase is the component of the respiratory chain that catalyzes the reduction of oxygen to water. Electrons originating from reduced cytochrome c in the intermembrane space (IMS) are transferred via the dinuclear copper A center (CU(A)) of COX2 and heme A of COX1 to the active site in COX1, a binuclear center (BNC) formed by heme A3 and copper B (CU(B)). The BNC reduces molecular oxygen to 2 water molecules unsing 4 electrons from cytochrome c in the IMS and 4 protons from the mitochondrial matrix. The protein is Cytochrome c oxidase subunit 12, mitochondrial (COX12) of Saccharomyces cerevisiae (strain ATCC 204508 / S288c) (Baker's yeast).